Reading from the N-terminus, the 294-residue chain is tRNA-cytidine(32) 2-sulfurtransferase (294 aa).

The short motif at 70-75 is the PP-loop motif element; sequence SGGKDS. [4Fe-4S] cluster-binding residues include Cys145, Cys148, and Cys236.

This sequence belongs to the TtcA family. In terms of assembly, homodimer. Mg(2+) serves as cofactor. The cofactor is [4Fe-4S] cluster.

Its subcellular location is the cytoplasm. It carries out the reaction cytidine(32) in tRNA + S-sulfanyl-L-cysteinyl-[cysteine desulfurase] + AH2 + ATP = 2-thiocytidine(32) in tRNA + L-cysteinyl-[cysteine desulfurase] + A + AMP + diphosphate + H(+). It participates in tRNA modification. In terms of biological role, catalyzes the ATP-dependent 2-thiolation of cytidine in position 32 of tRNA, to form 2-thiocytidine (s(2)C32). The sulfur atoms are provided by the cysteine/cysteine desulfurase (IscS) system. In Rhizobium meliloti (strain 1021) (Ensifer meliloti), this protein is tRNA-cytidine(32) 2-sulfurtransferase.